Reading from the N-terminus, the 166-residue chain is Twist-related protein (166 aa).

A compositionally biased stretch (low complexity) spans 1–18; sequence MMQEESSSPVSPVDSLSN. Positions 1–83 are disordered; that stretch reads MMQEESSSPV…RVMANVRERQ (83 aa). The segment covering 28–39 has biased composition (basic residues); it reads SKRGCRKRRSAR. A compositionally biased stretch (polar residues) spans 57 to 75; sequence ASSTGSSPQSFEELQSQRV. The 52-residue stretch at 72–123 folds into the bHLH domain; it reads SQRVMANVRERQRTQSLNEAFSSLRKIIPTLPSDKLSKIQTLKLASRYIDFL.

Efficient DNA binding requires dimerization with another bHLH protein. Homodimer. Subset of mesodermal cells.

Its subcellular location is the nucleus. In terms of biological role, probable transcription factor, which may be involved, with other proteins, in establishing the pattern of cell type-specific gene expression in mesodermal cell subgroups. The chain is Twist-related protein (twist1) from Xenopus laevis (African clawed frog).